Here is a 455-residue protein sequence, read N- to C-terminus: N-lysine methyltransferase setd6 (455 aa).

Positions 38–266 (PKVYISTEGT…AGQELFNTYG (229 aa)) constitute an SET domain.

It belongs to the class V-like SAM-binding methyltransferase superfamily. Histone-lysine methyltransferase family. SETD6 subfamily.

The protein localises to the nucleus. In terms of biological role, protein-lysine N-methyltransferase. In Xenopus laevis (African clawed frog), this protein is N-lysine methyltransferase setd6 (setd6).